A 160-amino-acid polypeptide reads, in one-letter code: MTNKVIYPGTFDPITNGHTDLIGRAARLFDEVVVGVANSPSKRPLFDLAERVLLARQVTAHLPNVKVVGFSGLLVDFAKEQQANVLIRGLRAVSDFEYEFQLANMNRRLMPELESVFLTPAEENSFISSTLVKEVALHGGDIRQFVDPIVAKAIAAKQGK.

Threonine 10 is a binding site for substrate. ATP is bound by residues 10–11 and histidine 18; that span reads TF. Positions 42, 74, and 88 each coordinate substrate. Residues 89–91, glutamate 99, and 124–130 each bind ATP; these read GLR and NSFISST.

This sequence belongs to the bacterial CoaD family. In terms of assembly, homohexamer. Mg(2+) is required as a cofactor.

It localises to the cytoplasm. It carries out the reaction (R)-4'-phosphopantetheine + ATP + H(+) = 3'-dephospho-CoA + diphosphate. Its pathway is cofactor biosynthesis; coenzyme A biosynthesis; CoA from (R)-pantothenate: step 4/5. In terms of biological role, reversibly transfers an adenylyl group from ATP to 4'-phosphopantetheine, yielding dephospho-CoA (dPCoA) and pyrophosphate. This chain is Phosphopantetheine adenylyltransferase, found in Aeromonas salmonicida (strain A449).